The chain runs to 431 residues: Large envelope protein (431 aa).

A lipid anchor (N-myristoyl glycine; by host) is attached at Gly2. A pre-S1 region spans residues 2–148; the sequence is GNNIKVTFNP…PPLRDTHPHL (147 aa). Positions 2–207 are pre-S; that stretch reads GNNIKVTFNP…PSTTGDPALS (206 aa). Residues 2–214 are Virion surface; in external conformation-facing; the sequence is GNNIKVTFNP…ALSPEMSPSS (213 aa). Residues 2–286 lie on the Intravirion; in internal conformation side of the membrane; the sequence is GNNIKVTFNP…NGFRWMYLRR (285 aa). Asn3 is a glycosylation site (N-linked (GlcNAc...) asparagine). Residues 115–146 are disordered; that stretch reads IPRGLVPPQTPTNRDQGRKPTPPTPPLRDTHP. The pre-S2 stretch occupies residues 149–207; it reads TMKNQTFRLQGFVDGLRDLTTTERYHNAYGDPFTTLSPVVPTVSTILSPPSTTGDPALS. The chain crosses the membrane as a helical span at residues 215–235; sequence LLGLLAGLQVVYFLWTKILTI. At 236–286 the chain is on the intravirion; in external conformation side; that stretch reads AQNLDWWWTSLSFPGGIPECTGQNSQFQTCKHLPTSCPPTCNGFRWMYLRR. Residues 287–307 traverse the membrane as a helical segment; it reads FIIYLLVLLLCLIFLLVLLDW. Residues 308–379 are Virion surface-facing; that stretch reads KGLIPVCPLQ…WALARFSWLN (72 aa). Residue Asn351 is glycosylated (N-linked (GlcNAc...) asparagine; by host). A helical transmembrane segment spans residues 380 to 400; the sequence is LLVPLLQWLGGISLIAWFLLI. The Intravirion segment spans residues 401-406; that stretch reads WMIWFW. Residues 407–429 form a helical membrane-spanning segment; that stretch reads GPALLSILPPFIPIFVLFFLIWV. The Virion surface portion of the chain corresponds to 430 to 431; it reads YI.

It belongs to the orthohepadnavirus major surface antigen family. In its internal form (Li-HBsAg), interacts with the capsid protein and with the isoform S. Interacts with host chaperone CANX. As to quaternary structure, associates with host chaperone CANX through its pre-S2 N glycan; this association may be essential for isoform M proper secretion. In terms of assembly, interacts with isoform L. Interacts with the antigens of satellite virus HDV (HDVAgs); this interaction is required for encapsidation of HDV genomic RNA. Isoform M is N-terminally acetylated by host at a ratio of 90%, and N-glycosylated by host at the pre-S2 region. Post-translationally, myristoylated.

It is found in the virion membrane. The large envelope protein exists in two topological conformations, one which is termed 'external' or Le-HBsAg and the other 'internal' or Li-HBsAg. In its external conformation the protein attaches the virus to cell receptors and thereby initiating infection. This interaction determines the species specificity and liver tropism. This attachment induces virion internalization predominantly through caveolin-mediated endocytosis. The large envelope protein also assures fusion between virion membrane and endosomal membrane. In its internal conformation the protein plays a role in virion morphogenesis and mediates the contact with the nucleocapsid like a matrix protein. Functionally, the middle envelope protein plays an important role in the budding of the virion. It is involved in the induction of budding in a nucleocapsid independent way. In this process the majority of envelope proteins bud to form subviral lipoprotein particles of 22 nm of diameter that do not contain a nucleocapsid. This chain is Large envelope protein, found in Woodchuck hepatitis B virus (isolate 59) (WHV).